A 204-amino-acid polypeptide reads, in one-letter code: uncharacterized protein (204 aa).

It is found in the cytoplasm. The protein localises to the nucleus. This is an uncharacterized protein from Schizosaccharomyces pombe (strain 972 / ATCC 24843) (Fission yeast).